Consider the following 372-residue polypeptide: Cell division protein FtsZ 1 (372 aa).

GTP is bound by residues 51–55 (GAGCN), 138–140 (GTG), glutamate 169, arginine 173, and aspartate 216. The tract at residues 352–372 (EETPAPSEEETTPVKIDIPEL) is disordered.

This sequence belongs to the FtsZ family. Homodimer. Polymerizes to form a dynamic ring structure in a strictly GTP-dependent manner. Interacts directly with several other division proteins.

It localises to the cytoplasm. Essential cell division protein that forms a contractile ring structure (Z ring) at the future cell division site. The regulation of the ring assembly controls the timing and the location of cell division. One of the functions of the FtsZ ring is to recruit other cell division proteins to the septum to produce a new cell wall between the dividing cells. Binds GTP and shows GTPase activity. This Pyrococcus horikoshii (strain ATCC 700860 / DSM 12428 / JCM 9974 / NBRC 100139 / OT-3) protein is Cell division protein FtsZ 1.